Consider the following 164-residue polypeptide: UPF0304 protein CKO_00501 (164 aa).

It belongs to the UPF0304 family.

The protein is UPF0304 protein CKO_00501 of Citrobacter koseri (strain ATCC BAA-895 / CDC 4225-83 / SGSC4696).